We begin with the raw amino-acid sequence, 279 residues long: Bifunctional protein FolD (279 aa).

NADP(+) is bound by residues 158-160 (GRS), S183, and I224.

This sequence belongs to the tetrahydrofolate dehydrogenase/cyclohydrolase family. As to quaternary structure, homodimer.

The enzyme catalyses (6R)-5,10-methylene-5,6,7,8-tetrahydrofolate + NADP(+) = (6R)-5,10-methenyltetrahydrofolate + NADPH. The catalysed reaction is (6R)-5,10-methenyltetrahydrofolate + H2O = (6R)-10-formyltetrahydrofolate + H(+). It functions in the pathway one-carbon metabolism; tetrahydrofolate interconversion. In terms of biological role, catalyzes the oxidation of 5,10-methylenetetrahydrofolate to 5,10-methenyltetrahydrofolate and then the hydrolysis of 5,10-methenyltetrahydrofolate to 10-formyltetrahydrofolate. In Caldicellulosiruptor saccharolyticus (strain ATCC 43494 / DSM 8903 / Tp8T 6331), this protein is Bifunctional protein FolD.